The sequence spans 625 residues: tRNA uridine 5-carboxymethylaminomethyl modification enzyme MnmG (625 aa).

FAD is bound by residues 9-14 (GGGHAG), valine 121, and serine 177. Position 271 to 285 (271 to 285 (GPRYCPSIEDKVNRF)) interacts with NAD(+). Glutamine 368 serves as a coordination point for FAD.

This sequence belongs to the MnmG family. As to quaternary structure, homodimer. Heterotetramer of two MnmE and two MnmG subunits. The cofactor is FAD.

Its subcellular location is the cytoplasm. In terms of biological role, NAD-binding protein involved in the addition of a carboxymethylaminomethyl (cmnm) group at the wobble position (U34) of certain tRNAs, forming tRNA-cmnm(5)s(2)U34. This Aliarcobacter butzleri (strain RM4018) (Arcobacter butzleri) protein is tRNA uridine 5-carboxymethylaminomethyl modification enzyme MnmG.